We begin with the raw amino-acid sequence, 226 residues long: 7-cyano-7-deazaguanine synthase (226 aa).

8-18 (LSGGLDSTTVL) serves as a coordination point for ATP. Residues C190, C198, C201, and C204 each contribute to the Zn(2+) site.

It belongs to the QueC family. In terms of assembly, homodimer. Zn(2+) serves as cofactor.

It carries out the reaction 7-carboxy-7-deazaguanine + NH4(+) + ATP = 7-cyano-7-deazaguanine + ADP + phosphate + H2O + H(+). It participates in purine metabolism; 7-cyano-7-deazaguanine biosynthesis. Its function is as follows. Catalyzes the ATP-dependent conversion of 7-carboxy-7-deazaguanine (CDG) to 7-cyano-7-deazaguanine (preQ(0)). This is 7-cyano-7-deazaguanine synthase from Clostridium kluyveri (strain ATCC 8527 / DSM 555 / NBRC 12016 / NCIMB 10680 / K1).